A 309-amino-acid chain; its full sequence is Porphobilinogen deaminase (309 aa).

An S-(dipyrrolylmethanemethyl)cysteine modification is found at C241.

The protein belongs to the HMBS family. As to quaternary structure, monomer. It depends on dipyrromethane as a cofactor.

The enzyme catalyses 4 porphobilinogen + H2O = hydroxymethylbilane + 4 NH4(+). It participates in porphyrin-containing compound metabolism; protoporphyrin-IX biosynthesis; coproporphyrinogen-III from 5-aminolevulinate: step 2/4. Functionally, tetrapolymerization of the monopyrrole PBG into the hydroxymethylbilane pre-uroporphyrinogen in several discrete steps. The protein is Porphobilinogen deaminase of Bacillus cereus (strain AH187).